A 160-amino-acid polypeptide reads, in one-letter code: SsrA-binding protein (160 aa).

Belongs to the SmpB family.

It localises to the cytoplasm. Required for rescue of stalled ribosomes mediated by trans-translation. Binds to transfer-messenger RNA (tmRNA), required for stable association of tmRNA with ribosomes. tmRNA and SmpB together mimic tRNA shape, replacing the anticodon stem-loop with SmpB. tmRNA is encoded by the ssrA gene; the 2 termini fold to resemble tRNA(Ala) and it encodes a 'tag peptide', a short internal open reading frame. During trans-translation Ala-aminoacylated tmRNA acts like a tRNA, entering the A-site of stalled ribosomes, displacing the stalled mRNA. The ribosome then switches to translate the ORF on the tmRNA; the nascent peptide is terminated with the 'tag peptide' encoded by the tmRNA and targeted for degradation. The ribosome is freed to recommence translation, which seems to be the essential function of trans-translation. In Erwinia tasmaniensis (strain DSM 17950 / CFBP 7177 / CIP 109463 / NCPPB 4357 / Et1/99), this protein is SsrA-binding protein.